The following is a 389-amino-acid chain: Sulfate adenylyltransferase (389 aa).

This sequence belongs to the sulfate adenylyltransferase family.

The enzyme catalyses sulfate + ATP + H(+) = adenosine 5'-phosphosulfate + diphosphate. The protein operates within sulfur metabolism; hydrogen sulfide biosynthesis; sulfite from sulfate: step 1/3. The polypeptide is Sulfate adenylyltransferase (Deinococcus geothermalis (strain DSM 11300 / CIP 105573 / AG-3a)).